The following is a 159-amino-acid chain: Large ribosomal subunit protein uL10 (159 aa).

The protein belongs to the universal ribosomal protein uL10 family. In terms of assembly, part of the ribosomal stalk of the 50S ribosomal subunit. The N-terminus interacts with L11 and the large rRNA to form the base of the stalk. The C-terminus forms an elongated spine to which L12 dimers bind in a sequential fashion forming a multimeric L10(L12)X complex.

Functionally, forms part of the ribosomal stalk, playing a central role in the interaction of the ribosome with GTP-bound translation factors. The protein is Large ribosomal subunit protein uL10 of Nautilia profundicola (strain ATCC BAA-1463 / DSM 18972 / AmH).